The primary structure comprises 404 residues: Cysteine desulfurase IscS (404 aa).

Pyridoxal 5'-phosphate-binding positions include 75–76, N155, Q183, and 203–205; these read AT and SAH. At K206 the chain carries N6-(pyridoxal phosphate)lysine. T243 lines the pyridoxal 5'-phosphate pocket. The Cysteine persulfide intermediate role is filled by C328. C328 lines the [2Fe-2S] cluster pocket.

This sequence belongs to the class-V pyridoxal-phosphate-dependent aminotransferase family. NifS/IscS subfamily. Homodimer. Forms a heterotetramer with IscU, interacts with other sulfur acceptors. The cofactor is pyridoxal 5'-phosphate.

The protein resides in the cytoplasm. It catalyses the reaction (sulfur carrier)-H + L-cysteine = (sulfur carrier)-SH + L-alanine. Its pathway is cofactor biosynthesis; iron-sulfur cluster biosynthesis. Functionally, master enzyme that delivers sulfur to a number of partners involved in Fe-S cluster assembly, tRNA modification or cofactor biosynthesis. Catalyzes the removal of elemental sulfur atoms from cysteine to produce alanine. Functions as a sulfur delivery protein for Fe-S cluster synthesis onto IscU, an Fe-S scaffold assembly protein, as well as other S acceptor proteins. The chain is Cysteine desulfurase IscS from Vesicomyosocius okutanii subsp. Calyptogena okutanii (strain HA).